The following is a 203-amino-acid chain: E3 ubiquitin-protein ligase rnf152-A (203 aa).

The RING-type; degenerate zinc-finger motif lies at 12 to 55 (CQICFNYYSPRRRPKLLDCKRTCCSVCLQQMRACQKDLRCPWCR). A helical membrane pass occupies residues 167–187 (SGICTVILVACVLVFLLGIVL).

Belongs to the RNF152 family.

The protein localises to the lysosome membrane. The catalysed reaction is S-ubiquitinyl-[E2 ubiquitin-conjugating enzyme]-L-cysteine + [acceptor protein]-L-lysine = [E2 ubiquitin-conjugating enzyme]-L-cysteine + N(6)-ubiquitinyl-[acceptor protein]-L-lysine.. It functions in the pathway protein modification; protein ubiquitination. Functionally, E3 ubiquitin-protein ligase that acts as a negative regulator of mTORC1 signaling by mediating ubiquitination of RagA/RRAGA and RHEB. Catalyzes 'Lys-63'-linked polyubiquitination of RagA/RRAGA in response to amino acid starvation, thereby regulating mTORC1 signaling. Also mediates monoubiquitination of RHEB, promoting its association with the TSC-TBC complex and subsequent inhibition. Also mediates 'Lys-48'-linked polyubiquitination of target proteins and their subsequent targeting to the proteasome for degradation. This chain is E3 ubiquitin-protein ligase rnf152-A, found in Xenopus laevis (African clawed frog).